Reading from the N-terminus, the 212-residue chain is Acyl-homoserine-lactone synthase (212 aa).

Belongs to the autoinducer synthase family.

The enzyme catalyses a fatty acyl-[ACP] + S-adenosyl-L-methionine = an N-acyl-L-homoserine lactone + S-methyl-5'-thioadenosine + holo-[ACP] + H(+). Functionally, required for the synthesis of OHHL (N-(3-oxohexanoyl)-L-homoserine lactone), an autoinducer molecule which binds to the EchR transcriptional regulator. This chain is Acyl-homoserine-lactone synthase (echI), found in Dickeya chrysanthemi (Pectobacterium chrysanthemi).